A 213-amino-acid chain; its full sequence is ATP-dependent Clp protease proteolytic subunit (213 aa).

Residue serine 114 is the Nucleophile of the active site. The active site involves histidine 139.

It belongs to the peptidase S14 family. In terms of assembly, fourteen ClpP subunits assemble into 2 heptameric rings which stack back to back to give a disk-like structure with a central cavity, resembling the structure of eukaryotic proteasomes.

The protein resides in the cytoplasm. The enzyme catalyses Hydrolysis of proteins to small peptides in the presence of ATP and magnesium. alpha-casein is the usual test substrate. In the absence of ATP, only oligopeptides shorter than five residues are hydrolyzed (such as succinyl-Leu-Tyr-|-NHMec, and Leu-Tyr-Leu-|-Tyr-Trp, in which cleavage of the -Tyr-|-Leu- and -Tyr-|-Trp bonds also occurs).. Cleaves peptides in various proteins in a process that requires ATP hydrolysis. Has a chymotrypsin-like activity. Plays a major role in the degradation of misfolded proteins. The protein is ATP-dependent Clp protease proteolytic subunit of Pseudomonas syringae pv. syringae (strain B728a).